A 2128-amino-acid polypeptide reads, in one-letter code: Spectrin beta chain, erythrocytic (2128 aa).

Polar residues predominate over residues 1–15 (MTSATEFENVGNQPP). The disordered stretch occupies residues 1 to 30 (MTSATEFENVGNQPPFSRINARWDAPDDEL). The tract at residues 2–275 (TSATEFENVG…IITYVVAFYH (274 aa)) is actin-binding. At Ser-36 the chain carries Phosphoserine. 2 consecutive Calponin-homology (CH) domains span residues 54 to 158 (VVQK…LRFQ) and 173 to 278 (RSAK…HYFS). Position 104 is a phosphothreonine (Thr-104). 17 Spectrin repeats span residues 303 to 411 (MIEK…LALR), 416 to 517 (RQEF…QRLE), 521 to 627 (ALQK…QLEQ), 630 to 733 (RLWK…DLQD), 736 to 838 (NFFQ…KLQE), 845 to 942 (VFGE…REAV), 950 to 1050 (NYCV…LSLG), 1054 to 1157 (KLQA…NTLT), 1162 to 1250 (FQEF…RHKK), 1267 to 1368 (ELQN…EQLS), 1381 to 1455 (ADLN…FLDL), 1473 to 1574 (LQIS…RLRD), 1576 to 1680 (HEAQ…RLEN), 1682 to 1784 (YHLF…MQLL), 1789 to 1890 (DLHR…RAQL), 1897 to 1997 (FRFF…DRLH), and 2004 to 2064 (QFSR…KPTT). The residue at position 1289 (Ser-1289) is a Phosphoserine. Ser-2034 is subject to Phosphoserine. The disordered stretch occupies residues 2062-2108 (PTTLELKERQTPERPTEEPGPQEEEGETAGEAPQVHHAATERTSPVS). 3 positions are modified to phosphothreonine: Thr-2064, Thr-2072, and Thr-2101. The segment covering 2066 to 2078 (ELKERQTPERPTE) has biased composition (basic and acidic residues). Ser-2105, Ser-2108, Ser-2114, Ser-2116, and Ser-2119 each carry phosphoserine.

The protein belongs to the spectrin family. As to quaternary structure, composed of nonhomologous chains, alpha and beta, which aggregate to form dimers, tetramers, and higher polymers. Interacts with BCAM.

The protein localises to the cytoplasm. The protein resides in the cytoskeleton. Its subcellular location is the cell cortex. Spectrin is the major constituent of the cytoskeletal network underlying the erythrocyte plasma membrane. It associates with band 4.1 and actin to form the cytoskeletal superstructure of the erythrocyte plasma membrane. In Mus musculus (Mouse), this protein is Spectrin beta chain, erythrocytic (Sptb).